The following is a 233-amino-acid chain: MWSGLLPPGLNESDVELNSDDDTTLESSELNLQEGKEDGTFEKTEMVDIPTDGPSTEAEANINAYEECPSGIPLNMWNKFQELHKKHSEQKTSASRSEKKKRKRSRKGKLKNEEESHSEQSSSETQWKELTQYFGVNERFDPPVKRKKVEKSGLEKRIDQAVEEWNIEKAEELSNQLATRELGVKIAKAIACHNFVKAKKEAENSQVARKKKKLAWGFEAKKRWETKSNMGYM.

Disordered regions lie at residues 1–57 (MWSG…PSTE) and 79–127 (KFQE…ETQW). Residues 13-24 (SDVELNSDDDTT) show a composition bias toward acidic residues. The span at 34 to 46 (EGKEDGTFEKTEM) shows a compositional bias: basic and acidic residues. A compositionally biased stretch (basic residues) spans 98–109 (EKKKRKRSRKGK). A coiled-coil region spans residues 144-164 (VKRKKVEKSGLEKRIDQAVEE).

The sequence is that of Protein FAM204A (FAM204A) from Bos taurus (Bovine).